A 394-amino-acid chain; its full sequence is Probable purine permease 23 (394 aa).

Residues 1 to 20 (MEMTEASKHTTTHEESEHVQ) are compositionally biased toward basic and acidic residues. The segment at 1–24 (MEMTEASKHTTTHEESEHVQNPEP) is disordered. Position 29 is a phosphoserine (serine 29). The next 10 helical transmembrane spans lie at 43–63 (ISVLICLFLVLLGDSLVILLL), 85–105 (WMQALIQNAAFPILIPLFFIF), 124–144 (LILLYFSLGVLVAAHSKLYAL), 152–172 (GFFMLISGSQLIFTLIFTAII), 180–200 (WIIISIVLILVSYAFGGPVFS), 211–231 (GIQAWLTFAASVAFALSLCLV), 254–274 (VLEMQICVSSVASVVCLVGLF), 301–321 (VGLALSWQVWAVGLIGLVLYV), 328–348 (IVHMCASPLMAFIVVLAFDFI), and 352–372 (FSWPRIGALIGSVLALGSYFY).

It belongs to the purine permeases (TC 2.A.7.14) family.

It localises to the membrane. The sequence is that of Probable purine permease 23 (PUP23) from Arabidopsis thaliana (Mouse-ear cress).